The following is a 138-amino-acid chain: Basic phospholipase A2 vaspin B chain (138 aa).

The first 16 residues, 1–16 (MRILWIVAVCLIGVEG), serve as a signal peptide directing secretion. Disulfide bonds link Cys42/Cys131, Cys44/Cys60, Cys59/Cys111, Cys65/Cys138, Cys66/Cys104, Cys73/Cys97, and Cys91/Cys102. Positions 43, 45, and 47 each coordinate Ca(2+). His63 is an active-site residue. Asp64 serves as a coordination point for Ca(2+). The active site involves Asp105.

Belongs to the phospholipase A2 family. Group II subfamily. D49 sub-subfamily. In terms of assembly, heterodimer of a weakly toxic basic protein having phospholipase A2 activity (B chain (AC Q8JFG1)) and a non-toxic acidic protein functioning as its inhibitor (A chain). Ca(2+) serves as cofactor. In terms of tissue distribution, expressed by the venom gland.

The protein resides in the secreted. It catalyses the reaction a 1,2-diacyl-sn-glycero-3-phosphocholine + H2O = a 1-acyl-sn-glycero-3-phosphocholine + a fatty acid + H(+). Functionally, heterodimer: postsynaptic neurotoxin. Its function is as follows. Monomer: snake venom phospholipase A2 (PLA2) that shows postsynaptic neurotoxicity. PLA2 catalyzes the calcium-dependent hydrolysis of the 2-acyl groups in 3-sn-phosphoglycerides. This is Basic phospholipase A2 vaspin B chain from Vipera aspis aspis (Aspic viper).